The chain runs to 176 residues: Ribosome maturation factor RimM (176 aa).

The 76-residue stretch at 99–174 (KDEFYVRDLI…IVLIQPELWN (76 aa)) folds into the PRC barrel domain.

Belongs to the RimM family. In terms of assembly, binds ribosomal protein uS19.

The protein resides in the cytoplasm. An accessory protein needed during the final step in the assembly of 30S ribosomal subunit, possibly for assembly of the head region. Essential for efficient processing of 16S rRNA. May be needed both before and after RbfA during the maturation of 16S rRNA. It has affinity for free ribosomal 30S subunits but not for 70S ribosomes. The chain is Ribosome maturation factor RimM from Leptospira borgpetersenii serovar Hardjo-bovis (strain JB197).